A 113-amino-acid polypeptide reads, in one-letter code: UPF0342 protein SpyM3_0545 (113 aa).

It belongs to the UPF0342 family.

The protein is UPF0342 protein SpyM3_0545 of Streptococcus pyogenes serotype M3 (strain ATCC BAA-595 / MGAS315).